The sequence spans 105 residues: Thioredoxin (105 aa).

Positions 1-105 constitute a Thioredoxin domain; that stretch reads MASNVTDKSF…SLIEWINNNI (105 aa). Cysteines 30 and 33 form a disulfide.

This sequence belongs to the thioredoxin family.

Its function is as follows. Component of the thioredoxin-thioredoxin reductase system. Participates in various redox reactions through the reversible oxidation of its active center dithiol to a disulfide and catalyzes dithiol-disulfide exchange reactions. The protein is Thioredoxin (trxA) of Rickettsia bellii (strain RML369-C).